Here is a 46-residue protein sequence, read N- to C-terminus: Photosystem II reaction center protein K (46 aa).

Residues 1–9 (MLILLNTFA) constitute a propeptide that is removed on maturation. Residues 25–45 (LPLIPLFFFLLVFVWQAAVGF) form a helical membrane-spanning segment.

The protein belongs to the PsbK family. As to quaternary structure, PSII is composed of 1 copy each of membrane proteins PsbA, PsbB, PsbC, PsbD, PsbE, PsbF, PsbH, PsbI, PsbJ, PsbK, PsbL, PsbM, PsbT, PsbX, PsbY, Psb30/Ycf12, peripheral proteins PsbO, CyanoQ (PsbQ), PsbU, PsbV and a large number of cofactors. It forms dimeric complexes.

Its subcellular location is the cellular thylakoid membrane. In terms of biological role, one of the components of the core complex of photosystem II (PSII). PSII is a light-driven water:plastoquinone oxidoreductase that uses light energy to abstract electrons from H(2)O, generating O(2) and a proton gradient subsequently used for ATP formation. It consists of a core antenna complex that captures photons, and an electron transfer chain that converts photonic excitation into a charge separation. This is Photosystem II reaction center protein K from Prochlorococcus marinus (strain MIT 9215).